The primary structure comprises 723 residues: Homeobox protein HAT3.1 (723 aa).

Residues 1 to 10 show a composition bias toward basic residues; that stretch reads MYKAVSKRVT. Disordered stretches follow at residues 1-94 and 135-173; these read MYKA…GSHR and KRAQRSKEDAGPSSVVANSTPVGRPKKKNKTMNKGQVRE. The span at 11–23 shows a compositional bias: polar residues; the sequence is RSSGSGLKQTNVD. Over residues 58–83 the composition is skewed to basic and acidic residues; it reads LHHEIMDHGKGNEEQKPTPQTVKKDS. A PHD-type zinc finger spans residues 265–322; that stretch reads DIFCAKCGSKDLSVDNDIILCDGFCDRGFHQYCLEPPLRKEDIPPDDEGWLCPGCDCK. 2 disordered regions span residues 357–628 and 680–723; these read GGQN…KTQR and VEKL…RRRK. Positions 365–407 are enriched in acidic residues; sequence LPSDDSDDEEYDPDCLNDNENDEDGSDDNEESENEDGSSDETE. Over residues 417–427 the composition is skewed to basic and acidic residues; it reads ESFKEGKDIMK. Acidic residues predominate over residues 435 to 453; sequence DDSEDDDYDPDAPTCDDDK. 2 stretches are compositionally biased toward basic and acidic residues: residues 518 to 530 and 547 to 556; these read RNVERLDYKKLYD and DKTARMGKED. A compositionally biased stretch (basic residues) spans 580-589; it reads KKLIRKSKRA. The segment at residues 614–673 is a DNA-binding region (homeobox); sequence SSSSACKQTDPKTQRLYISFQENQYPDKATKESLAKELQMTVKQVNNWFKHRRWSINSKP. Residues 680–690 show a composition bias toward basic and acidic residues; it reads VEKLKTGKEGE. Residues 695 to 705 are compositionally biased toward polar residues; sequence VAGSSKQTMET.

It belongs to the PHD-associated homeobox family. In terms of tissue distribution, primarily detected in root tissue.

It localises to the nucleus. Its function is as follows. Binds only to large DNA fragments. Recognizes a DNA fragment carrying 8 copies of box7 motif of the light-induced cab-E promoter of Nicotiana plumbaginifolia. Also recognizes the box7m1 motif. This chain is Homeobox protein HAT3.1 (HAT3.1), found in Arabidopsis thaliana (Mouse-ear cress).